We begin with the raw amino-acid sequence, 861 residues long: Protein argonaute-4 (861 aa).

In terms of domain architecture, PAZ spans 219–338; sequence PIIEFMCEVL…LPLEVCNIVA (120 aa). In terms of domain architecture, Piwi spans 509–820; sequence LIVVILPGKT…VAFRARYHLV (312 aa). The interval 825 to 846 is disordered; that stretch reads DSAEGSHVSGQSNGRDPQALAK.

It belongs to the argonaute family. Ago subfamily. In terms of assembly, interacts with EIF4B, IMP8, PRMT5, TNRC6A and TNRC6B. Interacts with ZFP36. Ubiquitinated on surface-exposed lysines by a SCF-like E3 ubiquitin-protein ligase complex containing ZSWIM8 during target-directed microRNA degradation (TDMD), a process that mediates degradation of microRNAs (miRNAs). Ubiquitination by the SCF-like E3 ubiquitin-protein ligase complex containing ZSWIM8 leads to its subsequent degradation, thereby exposing miRNAs for degradation. ZSWIM8 recognizes and binds AGO4 when it is engaged with a TDMD target.

It is found in the cytoplasm. It localises to the P-body. In terms of biological role, required for RNA-mediated gene silencing (RNAi). Binds to short RNAs such as microRNAs (miRNAs) and represses the translation of mRNAs which are complementary to them. Lacks endonuclease activity and does not appear to cleave target mRNAs. Also required for RNA-directed transcription and replication of the human hapatitis delta virus (HDV). The protein is Protein argonaute-4 (AGO4) of Homo sapiens (Human).